The primary structure comprises 951 residues: Serine/threonine-protein kinase ATG1 (951 aa).

In terms of domain architecture, Protein kinase spans 22-327 (FTINEEIGKG…FPEYFAHPVV (306 aa)). ATP is bound by residues 28–36 (IGKGSFATV) and lysine 51. Residue aspartate 165 is the Proton acceptor of the active site. Disordered stretches follow at residues 343 to 375 (IITPSRSPEASVARHPSLRERQRENPTPKPVET), 387 to 458 (EQAP…YDEQ), 514 to 573 (HIPK…SSPS), and 924 to 951 (HQSMPPPSSPRHSHSGGTTPTIANTPPH). 2 stretches are compositionally biased toward basic and acidic residues: residues 359-368 (SLRERQRENP) and 432-442 (PRQRDRTERHY). Composition is skewed to polar residues over residues 547-573 (AQGNTRPDTSSARNSYGSYGKTGSSPS) and 939-951 (GGTTPTIANTPPH).

It belongs to the protein kinase superfamily. Ser/Thr protein kinase family. APG1/unc-51/ULK1 subfamily. As to quaternary structure, homodimer. Forms a ternary complex with ATG13 and ATG17.

It localises to the cytoplasm. Its subcellular location is the preautophagosomal structure membrane. It carries out the reaction L-seryl-[protein] + ATP = O-phospho-L-seryl-[protein] + ADP + H(+). The enzyme catalyses L-threonyl-[protein] + ATP = O-phospho-L-threonyl-[protein] + ADP + H(+). Its function is as follows. Serine/threonine protein kinase involved in the cytoplasm to vacuole transport (Cvt) and found to be essential in autophagy, where it is required for the formation of autophagosomes. Involved in the clearance of protein aggregates which cannot be efficiently cleared by the proteasome. Required for selective autophagic degradation of the nucleus (nucleophagy) as well as for mitophagy which contributes to regulate mitochondrial quantity and quality by eliminating the mitochondria to a basal level to fulfill cellular energy requirements and preventing excess ROS production. Also involved in endoplasmic reticulum-specific autophagic process, in selective removal of ER-associated degradation (ERAD) substrates. Plays a key role in ATG9 and ATG23 cycling through the pre-autophagosomal structure and is necessary to promote ATG18 binding to ATG9 through phosphorylation of ATG9. Catalyzes phosphorylation of ATG4, decreasing the interaction between ATG4 and ATG8 and impairing deconjugation of PE-conjugated forms of ATG8. This is Serine/threonine-protein kinase ATG1 from Sclerotinia sclerotiorum (strain ATCC 18683 / 1980 / Ss-1) (White mold).